The following is a 149-amino-acid chain: Transcriptional regulator MraZ (149 aa).

SpoVT-AbrB domains lie at 7 to 54 (KYVN…GISH) and 83 to 126 (AVQL…QPQN).

This sequence belongs to the MraZ family. As to quaternary structure, forms oligomers.

Its subcellular location is the cytoplasm. The protein resides in the nucleoid. In Rickettsia akari (strain Hartford), this protein is Transcriptional regulator MraZ.